We begin with the raw amino-acid sequence, 467 residues long: Glycosyl hydrolase family 109 protein 1 (467 aa).

Positions Met1–Ala22 are cleaved as a signal peptide. Residues Met66–Arg67, Asp88, Trp137–His140, Glu157–Val158, and Asn186 each bind NAD(+). Substrate contacts are provided by residues Tyr215, Arg231, Tyr243 to His246, and Tyr321. Tyr243 serves as a coordination point for NAD(+).

Belongs to the Gfo/Idh/MocA family. Glycosyl hydrolase 109 subfamily. NAD(+) serves as cofactor.

In terms of biological role, glycosidase. The polypeptide is Glycosyl hydrolase family 109 protein 1 (Bacteroides thetaiotaomicron (strain ATCC 29148 / DSM 2079 / JCM 5827 / CCUG 10774 / NCTC 10582 / VPI-5482 / E50)).